Reading from the N-terminus, the 342-residue chain is Subtilisin-like serine protease Rho m 2.0101 (342 aa).

The propeptide at 1–30 (TMELLEDLIEQVRQLPMVNFIEKNSLVHAN) is removed in mature form. In terms of domain architecture, Inhibitor I9 spans 1-30 (TMELLEDLIEQVRQLPMVNFIEKNSLVHAN). One can recognise a Peptidase S8 domain in the interval 39 to 342 (PWGLARISHR…GQNLTKFWGH (304 aa)). Catalysis depends on charge relay system residues Asp-75 and His-107. Residues Asn-137 and Asn-171 are each glycosylated (N-linked (GlcNAc...) asparagine). Residue Ser-267 is the Charge relay system of the active site. Asn-335 is a glycosylation site (N-linked (GlcNAc...) asparagine).

This sequence belongs to the peptidase S8 family.

Functionally, serine protease. This chain is Subtilisin-like serine protease Rho m 2.0101, found in Rhodotorula mucilaginosa (Yeast).